Here is a 585-residue protein sequence, read N- to C-terminus: MAARGVGLLTRLPVCSQRRNRIPRSISRLLSCPGTIAASIGSEEQSSVVAETGIEDKTLQKKFSEVQKERREQAQRTVLIHCPNNINEKKFLKYLSQHGPVNNHFFYESFGLFAVVEFCQKDSIKSLQNGTHTPTQSTEAAIPFKSRFLNLRLKNPSSQVSGQPFVQTTNQSPPSSKKLFELLSYAESIEEQLNTLLKAFQLTEENIRLRHLTCSLIEDIAAAYFPSCVIRPFGSSVNTFGKLGCDLDMFLDLDETGKLDVHKNTGNFFMEFQVKNVPSERIATQKILSVIGECLDNFGPGCVGVQKILNARCPLVRFSHQGSGFQCDLTANNSIALKSSELLYIYGSLDSRVRALVFSVRCWARAHSLTSSIPGAWITNFSLTVMVIFFLQRRSPPILPTLDSLKSIADAEDRCILEGNNCTFVQDVNKIQPSGNTETLELLIKEFFEYFGNFAFNKNSINIRQGREQNKPDSSPLYIQNPFETSLNISKNVSQSQLQKFVELARDSAWILEQEDKNQPFSSSRQPWGLAALLLPPGSGHTSLSRKKKKKPMSEKVKGLLASIKSNSPDSSTDTSGKRTISTQA.

A mitochondrion-targeting transit peptide spans 1-37 (MAARGVGLLTRLPVCSQRRNRIPRSISRLLSCPGTIA). Lys-90 carries the post-translational modification N6-acetyllysine. Residues 107 to 109 (YES) and 244 to 245 (GC) each bind ATP. Positions 246 and 248 each coordinate Mg(2+). A PAP-associated domain is found at 441 to 486 (ELLIKEFFEYFGNFAFNKNSINIRQGREQNKPDSSPLYIQNPFETS). The disordered stretch occupies residues 537–585 (PGSGHTSLSRKKKKKPMSEKVKGLLASIKSNSPDSSTDTSGKRTISTQA). Positions 564-585 (IKSNSPDSSTDTSGKRTISTQA) are enriched in polar residues.

The protein belongs to the DNA polymerase type-B-like family. In terms of assembly, homodimer. It depends on Mg(2+) as a cofactor. Mn(2+) serves as cofactor.

Its subcellular location is the cytoplasm. The protein resides in the mitochondrion. The enzyme catalyses RNA(n) + ATP = RNA(n)-3'-adenine ribonucleotide + diphosphate. Polymerase that creates the 3' poly(A) tail of mitochondrial transcripts. Can use all four nucleotides, but has higher activity with ATP and UTP (in vitro). Plays a role in replication-dependent histone mRNA degradation. May be involved in the terminal uridylation of mature histone mRNAs before their degradation is initiated. Might be responsible for the creation of some UAA stop codons which are not encoded in mtDNA. The protein is Poly(A) RNA polymerase, mitochondrial (Mtpap) of Mus musculus (Mouse).